A 303-amino-acid polypeptide reads, in one-letter code: UDP-N-acetylenolpyruvoylglucosamine reductase (303 aa).

The region spanning 27-217 is the FAD-binding PCMH-type domain; that stretch reads KVGGISQVFY…QTVRKLTQPI (191 aa). R175 is a catalytic residue. The active-site Proton donor is the S224. The active site involves E294.

This sequence belongs to the MurB family. It depends on FAD as a cofactor.

It is found in the cytoplasm. It catalyses the reaction UDP-N-acetyl-alpha-D-muramate + NADP(+) = UDP-N-acetyl-3-O-(1-carboxyvinyl)-alpha-D-glucosamine + NADPH + H(+). It functions in the pathway cell wall biogenesis; peptidoglycan biosynthesis. Its function is as follows. Cell wall formation. The protein is UDP-N-acetylenolpyruvoylglucosamine reductase of Orientia tsutsugamushi (strain Ikeda) (Rickettsia tsutsugamushi).